The chain runs to 740 residues: Autotransporter adhesin BtaE (740 aa).

A signal peptide spans Met1–Ala11. The segment at Gly12–Tyr647 is surface exposed passenger domain. An outer membrane translocation of the passenger domain region spans residues Thr648–Gly686. The next 4 beta stranded transmembrane spans lie at Gly686–Phe696, Glu700–Thr710, Asn719–Ser725, and Asn728–Phe739. A translocator domain region spans residues Lys687–Asn740.

The protein belongs to the autotransporter-2 (AT-2) (TC 1.B.40) family. As to quaternary structure, homotrimer.

The protein localises to the cell surface. It localises to the cell outer membrane. Its function is as follows. Binds to hyaluronic acid and epithelial cells, and is required for full virulence in the mouse model. This chain is Autotransporter adhesin BtaE, found in Brucella suis biovar 1 (strain 1330).